The sequence spans 306 residues: Pantothenate kinase (306 aa).

Glycine 91 to serine 98 provides a ligand contact to ATP.

The protein belongs to the prokaryotic pantothenate kinase family.

Its subcellular location is the cytoplasm. It catalyses the reaction (R)-pantothenate + ATP = (R)-4'-phosphopantothenate + ADP + H(+). Its pathway is cofactor biosynthesis; coenzyme A biosynthesis; CoA from (R)-pantothenate: step 1/5. This chain is Pantothenate kinase, found in Streptococcus equi subsp. equi (strain 4047).